The chain runs to 328 residues: Acyl-CoA wax alcohol acyltransferase 1 (328 aa).

2 consecutive transmembrane segments (helical) span residues 12–32 and 34–53; these read SLSLLQWPLSYVAMFWIVQPL and ICLLFTPLWPLPTVYFVWLL.

It belongs to the diacylglycerol acyltransferase family.

The protein localises to the endoplasmic reticulum membrane. The enzyme catalyses a long chain fatty alcohol + a fatty acyl-CoA = a wax ester + CoA. It catalyses the reaction 1,2-di-(9Z-octadecenoyl)-sn-glycerol + (9Z)-octadecenoyl-CoA = 1,2,3-tri-(9Z-octadecenoyl)-glycerol + CoA. It carries out the reaction hexadecan-1-ol + (9Z)-octadecenoyl-CoA = hexadecanyl (9Z)-octadecenoate + CoA. The catalysed reaction is decan-1-ol + (9Z)-octadecenoyl-CoA = 1-O-decyl-(9Z)-octadecenoate + CoA. The enzyme catalyses (9Z)-hexadecen-1-ol + (9Z)-octadecenoyl-CoA = 1-O-(9Z)-hexadecenyl (9Z)-octadecenoate + CoA. It catalyses the reaction octadecan-1-ol + (9Z)-octadecenoyl-CoA = 1-O-octadecyl (9Z)-octadecenoate + CoA. It carries out the reaction (9Z)-octadecen-1-ol + (9Z)-octadecenoyl-CoA = 1-O-(9Z)-octadecenyl (9Z)-octadecenoate + CoA. The catalysed reaction is hexadecan-1-ol + hexadecanoyl-CoA = hexadecanyl hexadecanoate + CoA. The enzyme catalyses hexadecan-1-ol + (9Z)-hexadecenoyl-CoA = 1-O-hexadecyl (9Z)-hexadecenoate + CoA. It catalyses the reaction hexadecan-1-ol + octadecanoyl-CoA = hexadecanyl octadecanoate + CoA. It carries out the reaction eicosan-1-ol + (9Z)-octadecenoyl-CoA = 1-O-eicosanyl (9Z)-octadecenoate + CoA. Functionally, acyltransferase that catalyzes the formation of ester bonds between fatty alcohols and fatty acyl-CoAs to form wax monoesters. Shows a strong preference for decyl alcohol (C10), with less activity towards C16 and C18 alcohols. Shows a strong preference for saturated acyl-CoAs. The protein is Acyl-CoA wax alcohol acyltransferase 1 (Awat1) of Mus musculus (Mouse).